Here is a 337-residue protein sequence, read N- to C-terminus: Nucleoid-associated protein HS_0228 (337 aa).

The protein belongs to the YejK family.

It localises to the cytoplasm. The protein resides in the nucleoid. The protein is Nucleoid-associated protein HS_0228 of Histophilus somni (strain 129Pt) (Haemophilus somnus).